A 770-amino-acid chain; its full sequence is Capsid protein (770 aa).

Disordered stretches follow at residues 645-682 and 697-717; these read QRMQQQPTTTDIFSAGRKRPRRDTEVYHSSQEGEQKES and WEDSQQEESGSQSSEEETQTV. The span at 646–656 shows a compositional bias: polar residues; the sequence is RMQQQPTTTDI. Over residues 666–681 the composition is skewed to basic and acidic residues; the sequence is RDTEVYHSSQEGEQKE. Residues 703-717 are compositionally biased toward low complexity; the sequence is EESGSQSSEEETQTV.

Belongs to the anelloviridae capsid protein family.

It localises to the virion. In terms of biological role, self-assembles to form an icosahedral capsid with a T=1 symmetry, about 30 nm in diameter, and consisting of 60 capsid proteins. The capsid encapsulates the genomic DNA. Capsid protein is involved in attachment and entry into the host cell. The chain is Capsid protein from Homo sapiens (Human).